Consider the following 345-residue polypeptide: Variable large protein 23 (345 aa).

A signal peptide spans 1–18; it reads MRKRISAIIMTLFMVLVS. The N-palmitoyl cysteine moiety is linked to residue C19. Residue C19 is the site of S-diacylglycerol cysteine attachment.

The protein belongs to the variable large protein (Vlp) family. Delta subfamily.

It is found in the cell outer membrane. In terms of biological role, the Vlp and Vsp proteins are antigenically distinct proteins, only one vlp or vsp gene is transcriptionally active at any one time. Switching between these genes is a mechanism of host immune response evasion. This Borrelia hermsii protein is Variable large protein 23.